The primary structure comprises 541 residues: CTP synthase (541 aa).

Positions 1 to 271 (MVGKLNPTRF…DTQILKHFDV (271 aa)) are amidoligase domain. Ser19 lines the CTP pocket. Ser19 serves as a coordination point for UTP. ATP is bound by residues 20–25 (SLGKGL) and Asp77. Mg(2+) contacts are provided by Asp77 and Glu145. CTP contacts are provided by residues 152–154 (DIE), 192–197 (KTKPTQ), and Lys228. UTP-binding positions include 192 to 197 (KTKPTQ) and Lys228. The Glutamine amidotransferase type-1 domain occupies 296–537 (VIAIVGKYVT…VTSTLQVKKA (242 aa)). L-glutamine is bound at residue Gly355. The active-site Nucleophile; for glutamine hydrolysis is the Cys382. Residues 383–386 (LGMQ), Glu406, and Arg465 contribute to the L-glutamine site. Active-site residues include His510 and Glu512.

It belongs to the CTP synthase family. As to quaternary structure, homotetramer.

It catalyses the reaction UTP + L-glutamine + ATP + H2O = CTP + L-glutamate + ADP + phosphate + 2 H(+). The catalysed reaction is L-glutamine + H2O = L-glutamate + NH4(+). It carries out the reaction UTP + NH4(+) + ATP = CTP + ADP + phosphate + 2 H(+). The protein operates within pyrimidine metabolism; CTP biosynthesis via de novo pathway; CTP from UDP: step 2/2. Allosterically activated by GTP, when glutamine is the substrate; GTP has no effect on the reaction when ammonia is the substrate. The allosteric effector GTP functions by stabilizing the protein conformation that binds the tetrahedral intermediate(s) formed during glutamine hydrolysis. Inhibited by the product CTP, via allosteric rather than competitive inhibition. Functionally, catalyzes the ATP-dependent amination of UTP to CTP with either L-glutamine or ammonia as the source of nitrogen. Regulates intracellular CTP levels through interactions with the four ribonucleotide triphosphates. The protein is CTP synthase of Anaplasma phagocytophilum (strain HZ).